Consider the following 368-residue polypeptide: Probable endopolygalacturonase I (368 aa).

An N-terminal signal peptide occupies residues 1–18 (MRSVEILGLAALGSLVAA). Residues 19–31 (APSPSRVSNSAKK) constitute a propeptide that is removed on maturation. A disulfide bridge links Cys-35 with Cys-50. 2 PbH1 repeats span residues 162 to 192 (ATNL…DIGE) and 193 to 214 (SNGV…AINS). The Proton donor role is filled by Asp-207. Cys-209 and Cys-225 are oxidised to a cystine. His-229 is a catalytic residue. 3 PbH1 repeats span residues 244 to 265 (VKNV…RIKT), 273 to 295 (VGDV…VIEQ), and 307 to 328 (TTGV…ASNA). Asn-246 is a glycosylation site (N-linked (GlcNAc...) asparagine). 2 disulfides stabilise this stretch: Cys-335–Cys-340 and Cys-359–Cys-368.

The protein belongs to the glycosyl hydrolase 28 family.

It localises to the secreted. It carries out the reaction (1,4-alpha-D-galacturonosyl)n+m + H2O = (1,4-alpha-D-galacturonosyl)n + (1,4-alpha-D-galacturonosyl)m.. In terms of biological role, involved in maceration and soft-rotting of plant tissue. Hydrolyzes the 1,4-alpha glycosidic bonds of de-esterified pectate in the smooth region of the plant cell wall. The sequence is that of Probable endopolygalacturonase I (pgaI) from Aspergillus clavatus (strain ATCC 1007 / CBS 513.65 / DSM 816 / NCTC 3887 / NRRL 1 / QM 1276 / 107).